The primary structure comprises 199 residues: Protein GrpE (199 aa).

It belongs to the GrpE family. Homodimer.

It is found in the cytoplasm. Participates actively in the response to hyperosmotic and heat shock by preventing the aggregation of stress-denatured proteins, in association with DnaK and GrpE. It is the nucleotide exchange factor for DnaK and may function as a thermosensor. Unfolded proteins bind initially to DnaJ; upon interaction with the DnaJ-bound protein, DnaK hydrolyzes its bound ATP, resulting in the formation of a stable complex. GrpE releases ADP from DnaK; ATP binding to DnaK triggers the release of the substrate protein, thus completing the reaction cycle. Several rounds of ATP-dependent interactions between DnaJ, DnaK and GrpE are required for fully efficient folding. This is Protein GrpE from Fusobacterium nucleatum subsp. nucleatum (strain ATCC 25586 / DSM 15643 / BCRC 10681 / CIP 101130 / JCM 8532 / KCTC 2640 / LMG 13131 / VPI 4355).